The following is a 315-amino-acid chain: Methionyl-tRNA formyltransferase (315 aa).

The N-terminal domain stretch occupies residues S2–D189. Residue S113 to P116 participates in (6S)-5,6,7,8-tetrahydrofolate binding. Residues K210–A315 are C-terminal domain.

This sequence belongs to the Fmt family.

It catalyses the reaction L-methionyl-tRNA(fMet) + (6R)-10-formyltetrahydrofolate = N-formyl-L-methionyl-tRNA(fMet) + (6S)-5,6,7,8-tetrahydrofolate + H(+). Attaches a formyl group to the free amino group of methionyl-tRNA(fMet). The formyl group appears to play a dual role in the initiator identity of N-formylmethionyl-tRNA by promoting its recognition by IF2 and preventing the misappropriation of this tRNA by the elongation apparatus. This Salmonella choleraesuis (strain SC-B67) protein is Methionyl-tRNA formyltransferase.